Reading from the N-terminus, the 473-residue chain is Probable transporter MCH2 (473 aa).

At 1 to 37 the chain is on the cytoplasmic side; it reads MSEERHEDHHRDVENKLNLNGKDDINGNTSISIEVPD. The chain crosses the membrane as a helical span at residues 38-58; that stretch reads GGYGWFILLAFILYNFSTWGA. At 59–83 the chain is on the extracellular side; sequence NSGYAIYLAHYLENNTFAGGSKLDY. Residue asparagine 72 is glycosylated (N-linked (GlcNAc...) asparagine). A helical membrane pass occupies residues 84–105; the sequence is ASIGGLAFSCGLFFAPVITWLY. Residues 106–111 lie on the Cytoplasmic side of the membrane; that stretch reads HIFSIQ. A helical transmembrane segment spans residues 112 to 135; sequence FIIGLGILFQGAALLLAAFSVTLW. The Extracellular portion of the chain corresponds to 136-141; sequence EIYLTQ. The helical transmembrane segment at 142–163 threads the bilayer; that stretch reads GVLIGFGLAFIFIPSVTLIPLW. Residues 164–169 are Cytoplasmic-facing; the sequence is FRNKRS. A helical transmembrane segment spans residues 170–186; the sequence is LASGIGTAGSGLGGIVF. Over 187–200 the chain is Extracellular; it reads NLGMQSILQKRGVK. The helical transmembrane segment at 201–220 threads the bilayer; that stretch reads WALIAQCIICTSLSTIALML. At 221–243 the chain is on the cytoplasmic side; that stretch reads TRTTHQGLRQHKRSYKFELLDYD. Residues 244–268 form a helical membrane-spanning segment; sequence VLSNFAVWLLFGFVSFAMLGYVVLL. Residues 269-286 are Extracellular-facing; it reads YSLSDFTVSLGYTSKQGS. A helical membrane pass occupies residues 287-304; sequence YVSCMVSVGSLLGRPIVG. At 305–312 the chain is on the cytoplasmic side; sequence HIADKYGS. A helical transmembrane segment spans residues 313–332; the sequence is LTVGMILHLVMAILCWAMWI. The Extracellular segment spans residues 333–342; that stretch reads PCKNLATAIA. Residues 343–362 traverse the membrane as a helical segment; the sequence is FGLLVGSIMGTIWPTIASIV. Residues 363–370 lie on the Cytoplasmic side of the membrane; it reads TRIVGLQK. The chain crosses the membrane as a helical span at residues 371–394; sequence LPGTFGSTWIFMAAFALVAPIIGL. Over 395–408 the chain is Extracellular; the sequence is ELRSTDTNGNDYYR. A helical transmembrane segment spans residues 409–433; sequence TAIFVGFAYFGVSLCQWLLRGFIIA. Residues 434 to 473 are Cytoplasmic-facing; that stretch reads RDEIAVREAYSADQNELHLNVKLSHMSKCLFRYKQLPRRV.

It belongs to the major facilitator superfamily. Monocarboxylate porter (TC 2.A.1.13) family.

It is found in the membrane. In terms of biological role, probable transporter. Does not act in the transport of monocarboxylic acids across the plasma membrane. This is Probable transporter MCH2 (MCH2) from Saccharomyces cerevisiae (strain ATCC 204508 / S288c) (Baker's yeast).